Here is a 432-residue protein sequence, read N- to C-terminus: Adenylosuccinate synthetase (432 aa).

GTP-binding positions include 12 to 18 (GDEGKGK) and 40 to 42 (GHT). Asp-13 (proton acceptor) is an active-site residue. Residues Asp-13 and Gly-40 each contribute to the Mg(2+) site. Residues 13 to 16 (DEGK), 38 to 41 (NAGH), Thr-129, Arg-143, Gln-224, Thr-239, and Arg-303 contribute to the IMP site. His-41 serves as the catalytic Proton donor. 299–305 (VTTGRRR) lines the substrate pocket. GTP contacts are provided by residues Arg-305, 331 to 333 (KLD), and 413 to 415 (GVG).

Belongs to the adenylosuccinate synthetase family. In terms of assembly, homodimer. Mg(2+) serves as cofactor.

The protein resides in the cytoplasm. The catalysed reaction is IMP + L-aspartate + GTP = N(6)-(1,2-dicarboxyethyl)-AMP + GDP + phosphate + 2 H(+). Its pathway is purine metabolism; AMP biosynthesis via de novo pathway; AMP from IMP: step 1/2. Functionally, plays an important role in the de novo pathway of purine nucleotide biosynthesis. Catalyzes the first committed step in the biosynthesis of AMP from IMP. The protein is Adenylosuccinate synthetase of Mycobacterium avium (strain 104).